Here is a 263-residue protein sequence, read N- to C-terminus: Syntaxin-73 (263 aa).

Residues 1–240 (MGVIDLITRV…TVTKLRSSRN (240 aa)) lie on the Cytoplasmic side of the membrane. Phosphoserine is present on Ser-12. Residues 169–231 (YEMKRIKQAR…KSTNVRLKDT (63 aa)) enclose the t-SNARE coiled-coil homology domain. The chain crosses the membrane as a helical; Anchor for type IV membrane protein span at residues 241 to 261 (FCIDIILLCILLGIAAFIYNS). The Vesicular portion of the chain corresponds to 262–263 (VK).

This sequence belongs to the syntaxin family. As to quaternary structure, part of the t-SNARE complex. Expressed in root, leaf, stem, flower and silique.

It localises to the membrane. In terms of biological role, vesicle trafficking protein that functions in the secretory pathway. The protein is Syntaxin-73 (SYP73) of Arabidopsis thaliana (Mouse-ear cress).